A 638-amino-acid chain; its full sequence is DNA gyrase subunit B (638 aa).

Positions 422 to 536 (SELYIVEGDS…NGYVYIAQPP (115 aa)) constitute a Toprim domain. Mg(2+)-binding residues include Glu428, Asp501, and Asp503.

It belongs to the type II topoisomerase GyrB family. Heterotetramer, composed of two GyrA and two GyrB chains. In the heterotetramer, GyrA contains the active site tyrosine that forms a transient covalent intermediate with DNA, while GyrB binds cofactors and catalyzes ATP hydrolysis. Mg(2+) is required as a cofactor. Mn(2+) serves as cofactor. It depends on Ca(2+) as a cofactor.

It localises to the cytoplasm. The catalysed reaction is ATP-dependent breakage, passage and rejoining of double-stranded DNA.. In terms of biological role, a type II topoisomerase that negatively supercoils closed circular double-stranded (ds) DNA in an ATP-dependent manner to modulate DNA topology and maintain chromosomes in an underwound state. Negative supercoiling favors strand separation, and DNA replication, transcription, recombination and repair, all of which involve strand separation. Also able to catalyze the interconversion of other topological isomers of dsDNA rings, including catenanes and knotted rings. Type II topoisomerases break and join 2 DNA strands simultaneously in an ATP-dependent manner. This is DNA gyrase subunit B from Bacillus subtilis (strain 168).